The sequence spans 360 residues: LVLLLSLAQLWSCHLVTAVPLLGYREHNCDDPEAEQVALLAVDHINNHLQQGYKHILNRIDKVKVWPRRPTGEVYELEIDTLETTCHALDPTPLANCSVRQVTQHAVEGDCDFHVLKQDGQFTVLSAKCDSTPDSAEDILKLCPDCPLLTPLNDTRVAQAAEAALTAFNEKNNGAYLQLVEIARAQLVPLPASTYVEFTVAATDCVAKEVTDPAKCNLLADKQYGFCKATVAEKVAREEVEVTCTIFPAQPVVPQPQPGVAGAAAVEPAPAVDPASPVSPPDGQSPSSLVVGPVLVAQAPAPPRAHYDLRQTFAGVPSMESGSGEAFHPGKVPVVVQPSVGAAPGPVITPCPGKVRYFKI.

An N-terminal signal peptide occupies residues 1 to 15 (LVLLLSLAQLWSCHL). Positions 24-130 (YREHNCDDPE…QFTVLSAKCD (107 aa)) constitute a Cystatin fetuin-A-type 1 domain. Intrachain disulfides connect Cys-29–Cys-351, Cys-86–Cys-97, Cys-111–Cys-129, Cys-143–Cys-146, Cys-205–Cys-216, and Cys-227–Cys-244. Asn-96 is a glycosylation site (N-linked (GlcNAc...) asparagine). Ser-131 carries the post-translational modification Phosphoserine. A Phosphothreonine modification is found at Thr-132. Residue Ser-135 is modified to Phosphoserine. Residues 141 to 252 (KLCPDCPLLT…TCTIFPAQPV (112 aa)) enclose the Cystatin fetuin-A-type 2 domain. Asn-153 is a glycosylation site (N-linked (GlcNAc...) asparagine). The tract at residues 260-285 (VAGAAAVEPAPAVDPASPVSPPDGQS) is disordered. Thr-312 is subject to Phosphothreonine. Phosphoserine occurs at positions 318, 321, and 323.

This sequence belongs to the fetuin family. In terms of processing, phosphorylated by FAM20C in the extracellular medium. In terms of tissue distribution, bone marrow.

The protein localises to the secreted. Its function is as follows. A cell adhesion protein that binds immature cells of the granulocyte lineage. The protein is Alpha-2-HS-glycoprotein (AHSG) of Oryctolagus cuniculus (Rabbit).